The chain runs to 532 residues: Zinc finger protein 350 (532 aa).

One can recognise a KRAB domain in the interval 8–79 (ITLEDVAVDF…EDGIHSGACS (72 aa)). C2H2-type zinc fingers lie at residues 206–228 (HVCSECGKAFIKKSWLTDHQVMH), 234–256 (HRCSLCEKAFSRKFMLTEHQRTH), 262–284 (YECPECGKAFLKKSRLNIHQKTH), 290–312 (YICSECGKGFIQKGNLIVHQRIH), 318–340 (YICNECGKGFIQKTCLIAHQRFH), 346–368 (FVCSECGKSCSQKSGLIKHQRIH), 374–396 (FECSECGKAFSTKQKLIVHQRTH), and 402–424 (YGCNECGKAFAYMSCLVKHKRIH). Positions 427 to 443 (EKQEAAKVENPPAERHS) are enriched in basic and acidic residues. The segment at 427–465 (EKQEAAKVENPPAERHSSLHTSDVMQEKNSANGATTQVP) is disordered. Positions 445-465 (LHTSDVMQEKNSANGATTQVP) are enriched in polar residues.

Belongs to the krueppel C2H2-type zinc-finger protein family. As to quaternary structure, interacts with BRCA1. Interacts with RNF11. In terms of tissue distribution, widely expressed.

Its subcellular location is the nucleus. The protein resides in the nucleus matrix. Functionally, transcriptional repressor. Binds to a specific sequence, 5'-GGGxxxCAGxxxTTT-3', within GADD45 intron 3. In Homo sapiens (Human), this protein is Zinc finger protein 350 (ZNF350).